The following is a 126-amino-acid chain: UPF0102 protein Cphamn1_0017 (126 aa).

Belongs to the UPF0102 family.

The chain is UPF0102 protein Cphamn1_0017 from Chlorobium phaeobacteroides (strain BS1).